The following is a 128-amino-acid chain: Protein SOB FIVE-LIKE 3 (128 aa).

Disordered stretches follow at residues 1-26 (MERE…EEEE) and 54-128 (KDSD…HKKK). Over residues 8 to 18 (SSESGWTTYIS) the composition is skewed to polar residues. Positions 11–16 (SGWTTY) match the SOFL-A motif. The SOFL-B signature appears at 59 to 68 (SMASDASSGP). A compositionally biased stretch (basic and acidic residues) spans 80–104 (REGLALRNGKGESNDVYSHRIDDKN). The Nuclear localization signal motif lies at 111 to 118 (RKKEKKKS).

Belongs to the SOFL plant protein family. Expressed in seedlings, roots, flowers and siliques.

The protein localises to the cytoplasm. It is found in the nucleus. Functionally, involved in cytokinin-mediated development. This chain is Protein SOB FIVE-LIKE 3, found in Arabidopsis thaliana (Mouse-ear cress).